A 382-amino-acid polypeptide reads, in one-letter code: MKCAALITEYNPFHNGHVYHAQQARQIADADVTIAIMSGQFVMRGEPAVYNKFIRTQMALSTCDLVVELPAYAALSAGEYFAEFGVKVADYMNADALVFGSESGSIQAFEELALQINHIEEHPEFQIKLREGKSYPRIISELLGEPPLLQTPNNILGLSYVQAILKSAPTIQPFSIQRHKTEHHNQAISDNHFASGTAIRHALNTEDKMWEQVVPNSIHELYAKPHMNTNQLFPYLKYKILSTSSDDLRAIHTISEGFEHRLKSSISTSDNFEQLMNQLKTKRYTYTRIQRMLMNVLLNFKQQDKPTTLNAVRILGMNETGQRYLKQLKQDFPERRFITNVNKTTAPYFKPEIKATEIYNLISGQTQTDFNTPVIRVKNKEK.

ATP contacts are provided by residues 7–20, Gly-100, Asn-153, and Arg-178; that span reads ITEYNPFHNGHVYH.

It belongs to the TmcAL family.

Its subcellular location is the cytoplasm. It carries out the reaction cytidine(34) in elongator tRNA(Met) + acetate + ATP = N(4)-acetylcytidine(34) in elongator tRNA(Met) + AMP + diphosphate. Functionally, catalyzes the formation of N(4)-acetylcytidine (ac(4)C) at the wobble position of elongator tRNA(Met), using acetate and ATP as substrates. First activates an acetate ion to form acetyladenylate (Ac-AMP) and then transfers the acetyl group to tRNA to form ac(4)C34. The polypeptide is tRNA(Met) cytidine acetate ligase (Staphylococcus carnosus (strain TM300)).